The chain runs to 153 residues: UPF0756 membrane protein BCB4264_A4705 (153 aa).

Helical transmembrane passes span 8–28, 54–74, 87–107, and 117–137; these read FLFI…TVAI, LGVT…EIGF, WIAL…VQLL, and LVFG…GPLI.

It belongs to the UPF0756 family.

The protein localises to the cell membrane. This is UPF0756 membrane protein BCB4264_A4705 from Bacillus cereus (strain B4264).